A 366-amino-acid polypeptide reads, in one-letter code: Chorismate synthase (366 aa).

R48 is a binding site for NADP(+). FMN is bound by residues 131-133, 243-244, G288, 303-307, and R329; these read RAS, NA, and KPTSS.

Belongs to the chorismate synthase family. In terms of assembly, homotetramer. Requires FMNH2 as cofactor.

The catalysed reaction is 5-O-(1-carboxyvinyl)-3-phosphoshikimate = chorismate + phosphate. Its pathway is metabolic intermediate biosynthesis; chorismate biosynthesis; chorismate from D-erythrose 4-phosphate and phosphoenolpyruvate: step 7/7. In terms of biological role, catalyzes the anti-1,4-elimination of the C-3 phosphate and the C-6 proR hydrogen from 5-enolpyruvylshikimate-3-phosphate (EPSP) to yield chorismate, which is the branch point compound that serves as the starting substrate for the three terminal pathways of aromatic amino acid biosynthesis. This reaction introduces a second double bond into the aromatic ring system. The polypeptide is Chorismate synthase (Bartonella henselae (strain ATCC 49882 / DSM 28221 / CCUG 30454 / Houston 1) (Rochalimaea henselae)).